The following is a 154-amino-acid chain: Ubiquitin-conjugating enzyme E2 L3 (154 aa).

The UBC core domain maps to 2-149; the sequence is AASRRLMKEL…AEEFTKKYGE (148 aa). Cysteine 86 functions as the Glycyl thioester intermediate in the catalytic mechanism. The residue at position 131 (lysine 131) is an N6-acetyllysine.

Belongs to the ubiquitin-conjugating enzyme family. As to quaternary structure, interacts with PRKN; involved in ubiquitination and degradation of misfolded proteins. Interacts with UBE3A. Interacts with CCNB1IP1, CBL, ZAP70, RNF19A, RNF19B and RNF144B. Interacts with ARIH1. Interacts with ARIH2 (via RING-type 1). Interacts with NCOA1; they functionally interact to regulate progesterone receptor transcriptional activity. Interacts with NDFIP1 (via N-terminus); the interaction mediates recruitment of UBE2L3 to ITCH and causes MAP3K7 ubiquitination. In terms of processing, ubiquitinated. The alteration of UBE2L3 protein levels during the S-phase of the cell cycle is due to ubiquitin-dependent proteasomal degradation. Autoubiquitinated in vitro.

The protein resides in the nucleus. Its subcellular location is the cytoplasm. It catalyses the reaction S-ubiquitinyl-[E1 ubiquitin-activating enzyme]-L-cysteine + [E2 ubiquitin-conjugating enzyme]-L-cysteine = [E1 ubiquitin-activating enzyme]-L-cysteine + S-ubiquitinyl-[E2 ubiquitin-conjugating enzyme]-L-cysteine.. It functions in the pathway protein modification; protein ubiquitination. Ubiquitin-conjugating enzyme E2 that specifically acts with HECT-type and RBR family E3 ubiquitin-protein ligases. Does not function with most RING-containing E3 ubiquitin-protein ligases because it lacks intrinsic E3-independent reactivity with lysine: in contrast, it has activity with the RBR family E3 enzymes, such as PRKN, RNF31 and ARIH1, that function like RING-HECT hybrids. Accepts ubiquitin from the E1 complex and catalyzes its covalent attachment to other proteins. Mediates ubiquitination by the CUL9-RBX1 complex. In vitro catalyzes 'Lys-11'-linked polyubiquitination. Involved in the selective degradation of short-lived and abnormal proteins. Down-regulated during the S-phase it is involved in progression through the cell cycle. Regulates nuclear hormone receptors transcriptional activity. May play a role in myelopoiesis. The protein is Ubiquitin-conjugating enzyme E2 L3 (UBE2L3) of Bos taurus (Bovine).